A 61-amino-acid chain; its full sequence is Small ribosomal subunit protein uS14B (61 aa).

Positions 24, 27, 40, and 43 each coordinate Zn(2+).

The protein belongs to the universal ribosomal protein uS14 family. Zinc-binding uS14 subfamily. As to quaternary structure, part of the 30S ribosomal subunit. Contacts proteins S3 and S10. Zn(2+) is required as a cofactor.

In terms of biological role, binds 16S rRNA, required for the assembly of 30S particles and may also be responsible for determining the conformation of the 16S rRNA at the A site. The polypeptide is Small ribosomal subunit protein uS14B (Lacticaseibacillus paracasei (strain ATCC 334 / BCRC 17002 / CCUG 31169 / CIP 107868 / KCTC 3260 / NRRL B-441) (Lactobacillus paracasei)).